Here is a 252-residue protein sequence, read N- to C-terminus: Ribosomal RNA small subunit methyltransferase J (252 aa).

S-adenosyl-L-methionine-binding positions include 101 to 102, 117 to 118, 153 to 154, and D171; these read RD, ER, and SS.

The protein belongs to the methyltransferase superfamily. RsmJ family.

It is found in the cytoplasm. It catalyses the reaction guanosine(1516) in 16S rRNA + S-adenosyl-L-methionine = N(2)-methylguanosine(1516) in 16S rRNA + S-adenosyl-L-homocysteine + H(+). Its function is as follows. Specifically methylates the guanosine in position 1516 of 16S rRNA. This chain is Ribosomal RNA small subunit methyltransferase J, found in Salmonella paratyphi B (strain ATCC BAA-1250 / SPB7).